The following is a 222-amino-acid chain: Peptide methionine sulfoxide reductase MsrA (222 aa).

Residue C55 is part of the active site.

It belongs to the MsrA Met sulfoxide reductase family.

The catalysed reaction is L-methionyl-[protein] + [thioredoxin]-disulfide + H2O = L-methionyl-(S)-S-oxide-[protein] + [thioredoxin]-dithiol. The enzyme catalyses [thioredoxin]-disulfide + L-methionine + H2O = L-methionine (S)-S-oxide + [thioredoxin]-dithiol. Its function is as follows. Has an important function as a repair enzyme for proteins that have been inactivated by oxidation. Catalyzes the reversible oxidation-reduction of methionine sulfoxide in proteins to methionine. This is Peptide methionine sulfoxide reductase MsrA from Streptomyces griseus subsp. griseus (strain JCM 4626 / CBS 651.72 / NBRC 13350 / KCC S-0626 / ISP 5235).